Here is a 1127-residue protein sequence, read N- to C-terminus: Inactive phospholipase C-like protein 2 (1127 aa).

The segment covering 1–11 (MAECGRGGAAG) has biased composition (gly residues). The disordered stretch occupies residues 1-128 (MAECGRGGAA…KKTVSFSSMP (128 aa)). Ala2 is subject to N-acetylalanine. A Phosphoserine modification is found at Ser17. A compositionally biased stretch (low complexity) spans 19–31 (GPALGAKGALKAG). Gly residues predominate over residues 32-42 (VGEGGGGGGRL). At Thr84 the chain carries Phosphothreonine. Residues 141-251 (NSMVEGSELK…WVTGLRYLIS (111 aa)) enclose the PH domain. A PI-PLC X-box domain is found at 426 to 570 (QDMKQPLSHY…LKGKILIKAK (145 aa)). Thr584 carries the phosphothreonine modification. Positions 618–734 (LSELVSICKS…GYVLRPAIMR (117 aa)) constitute a PI-PLC Y-box domain. In terms of domain architecture, C2 spans 734 to 863 (REEVSFFSAN…TGYRHVPLQS (130 aa)). Residues 1101-1127 (GTENADVQKPRRSLEVIPEKANDETGE) form a disordered region. Basic and acidic residues predominate over residues 1106 to 1127 (DVQKPRRSLEVIPEKANDETGE). At Ser1113 the chain carries Phosphoserine.

The protein resides in the cytoplasm. May play an role in the regulation of Ins(1,4,5)P3 around the endoplasmic reticulum. This is Inactive phospholipase C-like protein 2 (PLCL2) from Homo sapiens (Human).